The primary structure comprises 271 residues: Aquaporin-11 (271 aa).

Residues 1 to 14 are Cytoplasmic-facing; sequence MSALLGLPPEVQDT. The chain crosses the membrane as a helical span at residues 15-35; it reads CISLGLMLLVVLFMGLARVIA. Residues 36–41 lie on the Lumenal side of the membrane; the sequence is RQQLHR. Residues 42 to 62 traverse the membrane as a helical segment; sequence PMVHAFVLEFLATFQLCYCTH. Topologically, residues 63–76 are cytoplasmic; that stretch reads ELQLLSEQDSGHPT. A helical transmembrane segment spans residues 77–97; sequence WTLTLIYFFSLVHGLTLVGTA. Residues 98–166 lie on the Lumenal side of the membrane; it reads SNPCGVMMQM…NPINTDISKA (69 aa). Positions 99–101 match the NPC motif; it reads NPC. The chain crosses the membrane as a helical span at residues 167-187; it reads IIIEAICSFIFHSALLHFQEV. Residues 188–194 lie on the Cytoplasmic side of the membrane; sequence RTKLRIH. The helical transmembrane segment at 195–215 threads the bilayer; sequence VLAALITFLAYAGGSLTGALF. An NPA motif is present at residues 216–218; the sequence is NPA. At 216–234 the chain is on the lumenal side; sequence NPALALSLHFPCFDESFYK. Residues 235–255 form a helical membrane-spanning segment; sequence FFVVYWVAPSLGVLLMILMFS. At 256–271 the chain is on the cytoplasmic side; it reads FFLPWLHNNQLSNKKE.

This sequence belongs to the MIP/aquaporin (TC 1.A.8) family. AQP11/AQP12 subfamily. Homodimer; disulfide-linked. Homotetramer. Can also form homomultimer. Post-translationally, not glycosylated. As to expression, expressed in retina specifically at retinal Mueller glial cells. Expressed in adult testis, in the elongated spermatids (ES) and in residual bodies inside Sertoli cells.

It localises to the endoplasmic reticulum membrane. It is found in the cytoplasmic vesicle membrane. The protein resides in the cell membrane. The catalysed reaction is H2O(in) = H2O(out). It catalyses the reaction glycerol(in) = glycerol(out). It carries out the reaction H2O2(out) = H2O2(in). Functionally, channel protein that facilitates the transport of water, glycerol and hydrogen peroxide across membrane of cell or organelles guaranteeing intracellular homeostasis in several organes like liver, kidney and brain. In situation of stress, participates in endoplasmic reticulum (ER) homeostasis by regulating redox homeostasis through the transport of hydrogen peroxide across the endoplasmic reticulum membrane thereby regulating the oxidative stress through the NADPH oxidase 2 pathway. Plays a role by maintaining an environment suitable for translation or protein foldings in the ER lumen namely by participating in the PKD1 glycosylation processing resulting in regulation of PKD1 membrane trafficking thereby preventing the accumulation of unfolding protein in ER. Plays a role in the proximal tubule function by regulating its endosomal acidification. May play a role in postnatal kidney development. The polypeptide is Aquaporin-11 (Rattus norvegicus (Rat)).